The following is a 180-amino-acid chain: UPF0227 protein Ent638_1623 (180 aa).

The protein belongs to the UPF0227 family.

This is UPF0227 protein Ent638_1623 from Enterobacter sp. (strain 638).